A 402-amino-acid polypeptide reads, in one-letter code: Ketol-acid reductoisomerase, mitochondrial (402 aa).

Residues 1-26 (MAARNCTKALRPLARQLATPAVQRRT) constitute a mitochondrion transit peptide. The region spanning 63-252 (KEEVHERADW…AVGSGYLYET (190 aa)) is the KARI N-terminal Rossmann domain. NADP(+) contacts are provided by residues 90–99 (GYGSQGHGQG), 114–119 (RKNGKS), and 152–156 (SDAAQ). The active site involves H177. The 148-residue stretch at 253 to 400 (TFEKEVYSDL…KAVRSLRPEN (148 aa)) folds into the KARI C-terminal knotted domain. The Mg(2+) site is built by D261, E265, E297, and E301. A substrate-binding site is contributed by S323.

The protein belongs to the ketol-acid reductoisomerase family. The cofactor is Mg(2+).

The protein resides in the mitochondrion. The catalysed reaction is (2R)-2,3-dihydroxy-3-methylbutanoate + NADP(+) = (2S)-2-acetolactate + NADPH + H(+). It catalyses the reaction (2R,3R)-2,3-dihydroxy-3-methylpentanoate + NADP(+) = (S)-2-ethyl-2-hydroxy-3-oxobutanoate + NADPH + H(+). It functions in the pathway amino-acid biosynthesis; L-isoleucine biosynthesis; L-isoleucine from 2-oxobutanoate: step 2/4. Its pathway is amino-acid biosynthesis; L-valine biosynthesis; L-valine from pyruvate: step 2/4. The chain is Ketol-acid reductoisomerase, mitochondrial (ilv-2) from Neurospora crassa (strain ATCC 24698 / 74-OR23-1A / CBS 708.71 / DSM 1257 / FGSC 987).